Here is a 317-residue protein sequence, read N- to C-terminus: Olfactory receptor 5AP2 (317 aa).

At Met1 to Gly32 the chain is on the extracellular side. Residue Asn12 is glycosylated (N-linked (GlcNAc...) asparagine). Residues Val33–Met53 form a helical membrane-spanning segment. Over Ala54 to Ser61 the chain is Cytoplasmic. A helical transmembrane segment spans residues Leu62–Ser82. At Ser83–Thr106 the chain is on the extracellular side. A disulfide bond links Cys104 and Cys196. Residues Gln107–Tyr127 traverse the membrane as a helical segment. Topologically, residues Asp128–Pro140 are cytoplasmic. The chain crosses the membrane as a helical span at residues Val141–Gly161. Residues Asn162–Gly203 are Extracellular-facing. The chain crosses the membrane as a helical span at residues Ile204–Ser224. At Tyr225–Ala244 the chain is on the cytoplasmic side. Residues Phe245–Met265 traverse the membrane as a helical segment. Topologically, residues Tyr266 to Asp278 are extracellular. The helical transmembrane segment at Lys279–Leu299 threads the bilayer. The Cytoplasmic portion of the chain corresponds to Lys300–Val317.

This sequence belongs to the G-protein coupled receptor 1 family.

It localises to the cell membrane. Its function is as follows. Odorant receptor. This Mus musculus (Mouse) protein is Olfactory receptor 5AP2.